The chain runs to 419 residues: Acyl-coenzyme A thioesterase 6 (419 aa).

Active-site charge relay system residues include Ser232, Asp324, and His358. The Peroxisome targeting signal motif lies at 417 to 419 (SKL).

Belongs to the C/M/P thioester hydrolase family. In terms of tissue distribution, highly expressed in white adipose tissue. Detected at lower levels in kidney, liver, brown adipose tissue and brain.

Its subcellular location is the peroxisome. It catalyses the reaction pristanoyl-CoA + H2O = 2,6,10,14-tetramethylpentadecanoate + CoA + H(+). The catalysed reaction is phytanoyl-CoA + H2O = 3,7,11,15-tetramethylhexadecanoate + CoA + H(+). It participates in lipid metabolism; fatty acid metabolism. Its function is as follows. Catalyzes the hydrolysis of acyl-CoAs into free fatty acids and coenzyme A (CoASH), regulating their respective intracellular levels. Catalyzes the hydrolysis of phytanoyl-CoA and pristanoyl-CoA, two methyl-branched fatty acids derived from phytol, that enter the body via the diet. This is Acyl-coenzyme A thioesterase 6 from Mus musculus (Mouse).